The chain runs to 485 residues: E3 ubiquitin-protein ligase TRIM68 (485 aa).

An RING-type zinc finger spans residues 16–61 (CPICMTFLREPMSIDCGHSFCHSCLSGLWEIPGESQNWGYTCPLCR). The segment at 93-134 (LKGDLCERHGEKLKMFCKEDVLIMCEACSQSPEHEAHSVVPM) adopts a B box-type zinc-finger fold. Zn(2+) is bound by residues cysteine 98, histidine 101, cysteine 120, and histidine 126. A coiled-coil region spans residues 207-239 (AEVAAALASLQREAAETMQKLELNHSELIQQSQ). Residues 285-481 (LKTDCRVLGL…NTAPLAICSL (197 aa)) enclose the B30.2/SPRY domain.

Belongs to the TRIM/RBCC family. Interacts with AR/androgen receptor (via ligand-binding domain). Interacts with KAT5/TIP60. In terms of processing, auto-ubiquitinated. In terms of tissue distribution, widely expressed. Expressed at high levels in prostate cancer cell lines. Up-regulation could be restricted to androgen-dependent cells.

It is found in the cytoplasm. Its subcellular location is the perinuclear region. It localises to the nucleus. It carries out the reaction S-ubiquitinyl-[E2 ubiquitin-conjugating enzyme]-L-cysteine + [acceptor protein]-L-lysine = [E2 ubiquitin-conjugating enzyme]-L-cysteine + N(6)-ubiquitinyl-[acceptor protein]-L-lysine.. The protein operates within protein modification; protein ubiquitination. Functionally, functions as a ubiquitin E3 ligase. Acts as a coactivator of androgen receptor (AR) depending on its ubiquitin ligase activity. The sequence is that of E3 ubiquitin-protein ligase TRIM68 (TRIM68) from Homo sapiens (Human).